The sequence spans 199 residues: Dephospho-CoA kinase (199 aa).

A DPCK domain is found at 4–199 (VIGLTGGIAS…DNVLQKWNIS (196 aa)). 12–17 (ASGKST) contributes to the ATP binding site.

It belongs to the CoaE family.

The protein localises to the cytoplasm. The catalysed reaction is 3'-dephospho-CoA + ATP = ADP + CoA + H(+). It functions in the pathway cofactor biosynthesis; coenzyme A biosynthesis; CoA from (R)-pantothenate: step 5/5. In terms of biological role, catalyzes the phosphorylation of the 3'-hydroxyl group of dephosphocoenzyme A to form coenzyme A. In Oceanobacillus iheyensis (strain DSM 14371 / CIP 107618 / JCM 11309 / KCTC 3954 / HTE831), this protein is Dephospho-CoA kinase.